The primary structure comprises 251 residues: Gamma-glutamyl peptidase 4 (251 aa).

Residues 16 to 213 (SEFAKKTYGG…IDRVLAGGHI (198 aa)) form the Glutamine amidotransferase type-1 domain. Cys100 serves as the catalytic Nucleophile. Residues His192 and Glu194 contribute to the active site.

Belongs to the peptidase C26 family.

It localises to the cytoplasm. The protein resides in the cytosol. The protein operates within secondary metabolite biosynthesis. In terms of biological role, involved in glucosinolate biosynthesis. Hydrolyzes the gamma-glutamyl peptide bond of several glutathione (GSH) conjugates to produce Cys-Gly conjugates related to glucosinolates. The gamma-Glu-Cys-Gly-GSH conjugates are the sulfur-donating molecule in glucosinolate biosynthesis. This is Gamma-glutamyl peptidase 4 from Arabidopsis thaliana (Mouse-ear cress).